The following is a 72-amino-acid chain: UPF0426 protein asl4034 (72 aa).

Belongs to the UPF0426 family.

This Nostoc sp. (strain PCC 7120 / SAG 25.82 / UTEX 2576) protein is UPF0426 protein asl4034.